The chain runs to 435 residues: MRKIIAGVFIFVFLISNLYAALVAEVTTGVIQKPLVTVVSDNVVDQFPQQVNSVIVADLNHNAKLQANDTIKYEIKQKQNIPWKSLKSDYVVLTKYTNNSYNNYTVEVQILKRNDTSYLQAITYKNINVSLMRTLAHKISNYVYQKLTGNQGFFLTKLAYVKVSNPYARYGRLYELIISDYDGYNKHVVLRQTDNPIATPSWSNDGRYIVYSSYSGGSMGVYTLEIATGKVTRITNYKGINSSPSLSPDGKEIALALSKGYSDQTNIYIMNLSTKALKRITINGINTAPKFSPNGQSIVFTSDREGRPNIYVASVNSKYPQSSILSTKIHQAYEPNYTPDGKNIVFMNQSSRTSGTQIADFNLANGSVTNITNGKADSSPTVSPYGDMVAYISTNTRGYSSLDMVSLDGDNHFNIETADNGNILIQSPSWSPKNF.

Residues methionine 1–alanine 20 form the signal peptide.

The protein belongs to the TolB family. The Tol-Pal system is composed of five core proteins: the inner membrane proteins TolA, TolQ and TolR, the periplasmic protein TolB and the outer membrane protein Pal. They form a network linking the inner and outer membranes and the peptidoglycan layer.

The protein resides in the periplasm. Part of the Tol-Pal system, which plays a role in outer membrane invagination during cell division and is important for maintaining outer membrane integrity. This chain is Tol-Pal system protein TolB, found in Francisella tularensis subsp. tularensis (strain WY96-3418).